Here is a 704-residue protein sequence, read N- to C-terminus: MSRRTRCEDLDELHYQDVDSDLLEQRDNRCKVKWTHEEDEQLRALVRQFGQQDWKFLASHFPNRTDQQCQYRWLRVLNPDLVKGPWTKEEDQKVIELVKKYGTKQWTLIAKHLKGRLGKQCRERWHNHLNPEVKKSCWTEEEDRIICEAHKVLGNRWAEIAKMLPGRTDNAVKNHWNSTIKRKVDTGGFPAESRDCKPVYLLLELEDKEQHQGVQPVDGQGSLVSSWPLVPSIVKEESSEEEIAIAATSAKELGHEPVPADLGEVRTPEPPESLKREYQEFSSPETSLPYKWVVEAANLLIPAVGSSLSEALDLIESDPDAWCDLSKFDLPEEPSTEGSVVSSPVQPQTSQQQQEEALQSSQQAATPGPSVTEYRLDGHTISDLSRSSRGELIPISPSTEFGGSGIGTPPSVLKRQKKRRVALSPVTENSASLSFLDSCNSLTPKSTPVKTLPFSPSQFLNFWNKQDTLELESPSLTSTPVCSQKVVVTTPLHRDKTPLHQKYPSSEVLPDQKYSMDNTPHTPTPFKNALEKYGPLKPLPQTPHLEEDLKEVLRSEAGMELIIEDDMRPEKQKRKPGLRRSPIKKVRKSLALDIMDEDGKLMSSTMPKPLSLPTSVTPSSCGFTSPGSKEGNSLLNQGFLQAKPEKVVAAQKTRSHIPTPAPMTHAWKTVACGGTKDQLFMQEKARQLLSRLKSSHTSRTLILS.

3 HTH myb-type domains span residues 26 to 77 (RDNR…LRVL), 78 to 133 (NPDL…NPEV), and 134 to 184 (KKSC…KRKV). Positions 54-77 (WKFLASHFPNRTDQQCQYRWLRVL) form a DNA-binding region, H-T-H motif. Residue K104 forms a Glycyl lysine isopeptide (Lys-Gly) (interchain with G-Cter in SUMO2) linkage. 2 DNA-binding regions (H-T-H motif) span residues 106–129 (WTLI…HNHL) and 157–180 (WAEI…NSTI). Residue K197 forms a Glycyl lysine isopeptide (Lys-Gly) (interchain with G-Cter in SUMO2) linkage. Position 267 is a phosphothreonine (T267). Residue K275 forms a Glycyl lysine isopeptide (Lys-Gly) (interchain with G-Cter in SUMO2) linkage. S282 carries the post-translational modification Phosphoserine. Residues 325–412 (LSKFDLPEEP…GSGIGTPPSV (88 aa)) are disordered. Positions 339 to 366 (SVVSSPVQPQTSQQQQEEALQSSQQAAT) are enriched in low complexity. S396 carries the post-translational modification Phosphoserine. A Glycyl lysine isopeptide (Lys-Gly) (interchain with G-Cter in SUMO2) cross-link involves residue K414. Phosphothreonine; by CDK2 occurs at positions 443 and 447. Glycyl lysine isopeptide (Lys-Gly) (interchain with G-Cter in SUMO2) cross-links involve residues K450 and K485. Phosphothreonine; by CDK2 occurs at positions 490 and 497. Glycyl lysine isopeptide (Lys-Gly) (interchain with G-Cter in SUMO2) cross-links involve residues K502 and K513. T524 is subject to Phosphothreonine; by CDK2. Residues K527, K537, and K550 each participate in a glycyl lysine isopeptide (Lys-Gly) (interchain with G-Cter in SUMO2) cross-link. S581 carries the phosphoserine; by CDK2 modification. Residues K588 and K600 each participate in a glycyl lysine isopeptide (Lys-Gly) (interchain with G-Cter in SUMO2) cross-link. A disordered region spans residues 603-626 (SSTMPKPLSLPTSVTPSSCGFTSP). The span at 607–620 (PKPLSLPTSVTPSS) shows a compositional bias: low complexity. Residues K629, K643, and K652 each participate in a glycyl lysine isopeptide (Lys-Gly) (interchain with G-Cter in SUMO2) cross-link.

In terms of assembly, component of the DREAM complex (also named LINC complex) at least composed of E2F4, E2F5, LIN9, LIN37, LIN52, LIN54, MYBL1, MYBL2, RBL1, RBL2, RBBP4, TFDP1 and TFDP2. The complex exists in quiescent cells where it represses cell cycle-dependent genes. It dissociates in S phase when LIN9, LIN37, LIN52 and LIN54 form a subcomplex that binds to MYBL2. Interacts with CCNF (via the Cyclin N-terminal domain). Phosphorylated by cyclin A/CDK2 during S-phase. Phosphorylation at Thr-524 is probably involved in transcriptional activity.

The protein resides in the nucleus. In terms of biological role, transcription factor involved in the regulation of cell survival, proliferation, and differentiation. Transactivates the expression of the CLU gene. The protein is Myb-related protein B (Mybl2) of Mus musculus (Mouse).